A 278-amino-acid polypeptide reads, in one-letter code: Protoheme IX farnesyltransferase (278 aa).

The next 9 membrane-spanning stretches (helical) occupy residues 12–32 (VIWLLILSSVVGYVYAAGTVD), 36–56 (LAALTAAATLAVGGSAAFNHY), 72–92 (PLPAGAIPPSNALVYSLALSA), 105–124 (LPGVFVALGWFFYAVVYTVW), 130–150 (WLNILGGGFAGNATFLGGYAL), 157–177 (LPAVLISFAIYLWIPSHIWAL), 204–224 (AIISALNIASAAYILWLYLVF), 228–248 (LPGLALVLAGVAGTVATSALA), and 257–277 (MWRMYKASSPILTLFLLALVF).

The protein belongs to the UbiA prenyltransferase family. Protoheme IX farnesyltransferase subfamily.

Its subcellular location is the cell membrane. The catalysed reaction is heme b + (2E,6E)-farnesyl diphosphate + H2O = Fe(II)-heme o + diphosphate. It functions in the pathway porphyrin-containing compound metabolism; heme O biosynthesis; heme O from protoheme: step 1/1. In terms of biological role, converts heme B (protoheme IX) to heme O by substitution of the vinyl group on carbon 2 of heme B porphyrin ring with a hydroxyethyl farnesyl side group. This Pyrobaculum neutrophilum (strain DSM 2338 / JCM 9278 / NBRC 100436 / V24Sta) (Thermoproteus neutrophilus) protein is Protoheme IX farnesyltransferase.